A 286-amino-acid chain; its full sequence is Polyamine aminopropyltransferase (286 aa).

The PABS domain occupies 5-238 (PLWHETLHDH…GIMTFAWASD (234 aa)). S-methyl-5'-thioadenosine is bound at residue glutamine 33. Spermidine contacts are provided by histidine 64 and aspartate 88. Residues glutamate 108 and 140–141 (DG) contribute to the S-methyl-5'-thioadenosine site. Catalysis depends on aspartate 158, which acts as the Proton acceptor. Residue 158 to 161 (DCTD) coordinates spermidine. Residue proline 165 participates in S-methyl-5'-thioadenosine binding.

Belongs to the spermidine/spermine synthase family. In terms of assembly, homodimer or homotetramer.

The protein localises to the cytoplasm. The enzyme catalyses S-adenosyl 3-(methylsulfanyl)propylamine + putrescine = S-methyl-5'-thioadenosine + spermidine + H(+). It functions in the pathway amine and polyamine biosynthesis; spermidine biosynthesis; spermidine from putrescine: step 1/1. Its function is as follows. Catalyzes the irreversible transfer of a propylamine group from the amino donor S-adenosylmethioninamine (decarboxy-AdoMet) to putrescine (1,4-diaminobutane) to yield spermidine. This Klebsiella pneumoniae subsp. pneumoniae (strain ATCC 700721 / MGH 78578) protein is Polyamine aminopropyltransferase.